Reading from the N-terminus, the 349-residue chain is AA9 family lytic polysaccharide monooxygenase A (349 aa).

The signal sequence occupies residues 1 to 19 (MKSTFGLLALAAAAKLVSA). The Cu(2+) site is built by His-20 and His-102. An intrachain disulfide couples Cys-62 to Cys-183. His-169 contacts O2. Residue Tyr-180 coordinates Cu(2+). The tract at residues 233 to 304 (DGSSSGSSGS…SGSNSGSDSC (72 aa)) is disordered. Composition is skewed to low complexity over residues 234–262 (GSSS…AVPT) and 269–304 (TSAT…SDSC). The CBM1 domain occupies 311–347 (GSVKIYGQCGGQNYSGPTSCEAGLICKEWNPYYHQCV). Residue Asn-323 is glycosylated (N-linked (GlcNAc...) asparagine).

Belongs to the polysaccharide monooxygenase AA9 family. Cu(2+) is required as a cofactor.

It is found in the secreted. It carries out the reaction [(1-&gt;4)-beta-D-glucosyl]n+m + reduced acceptor + O2 = 4-dehydro-beta-D-glucosyl-[(1-&gt;4)-beta-D-glucosyl]n-1 + [(1-&gt;4)-beta-D-glucosyl]m + acceptor + H2O.. In terms of biological role, lytic polysaccharide monooxygenase (LPMO) that depolymerizes crystalline and amorphous polysaccharides via the oxidation of scissile alpha- or beta-(1-4)-glycosidic bonds, yielding C4 oxidation products. Catalysis by LPMOs requires the reduction of the active-site copper from Cu(II) to Cu(I) by a reducing agent and H(2)O(2) or O(2) as a cosubstrate. The polypeptide is AA9 family lytic polysaccharide monooxygenase A (eglD) (Aspergillus fumigatus (strain CBS 144.89 / FGSC A1163 / CEA10) (Neosartorya fumigata)).